A 340-amino-acid chain; its full sequence is Glycerol-3-phosphate dehydrogenase [NAD(P)+] (340 aa).

NADPH contacts are provided by Ser15, Tyr16, His36, and Lys110. Lys110, Gly139, and Thr141 together coordinate sn-glycerol 3-phosphate. Ala143 contacts NADPH. Positions 195, 248, 258, 259, and 260 each coordinate sn-glycerol 3-phosphate. Lys195 functions as the Proton acceptor in the catalytic mechanism. Residue Arg259 coordinates NADPH. Residues Val283 and Glu285 each contribute to the NADPH site.

This sequence belongs to the NAD-dependent glycerol-3-phosphate dehydrogenase family.

It localises to the cytoplasm. It carries out the reaction sn-glycerol 3-phosphate + NAD(+) = dihydroxyacetone phosphate + NADH + H(+). It catalyses the reaction sn-glycerol 3-phosphate + NADP(+) = dihydroxyacetone phosphate + NADPH + H(+). The protein operates within membrane lipid metabolism; glycerophospholipid metabolism. Functionally, catalyzes the reduction of the glycolytic intermediate dihydroxyacetone phosphate (DHAP) to sn-glycerol 3-phosphate (G3P), the key precursor for phospholipid synthesis. The polypeptide is Glycerol-3-phosphate dehydrogenase [NAD(P)+] (Baumannia cicadellinicola subsp. Homalodisca coagulata).